A 343-amino-acid polypeptide reads, in one-letter code: Probable dual-specificity RNA methyltransferase RlmN (343 aa).

The active-site Proton acceptor is Glu93. The Radical SAM core domain occupies 99 to 320; the sequence is TDDRATLCVS…NAKGVVCTIR (222 aa). Cys106 and Cys331 are disulfide-bonded. Residues Cys113, Cys117, and Cys120 each coordinate [4Fe-4S] cluster. Residues 158-159, Ser190, 212-214, and His288 contribute to the S-adenosyl-L-methionine site; these read GE and SLH. The active-site S-methylcysteine intermediate is Cys331.

Belongs to the radical SAM superfamily. RlmN family. It depends on [4Fe-4S] cluster as a cofactor.

It localises to the cytoplasm. It carries out the reaction adenosine(2503) in 23S rRNA + 2 reduced [2Fe-2S]-[ferredoxin] + 2 S-adenosyl-L-methionine = 2-methyladenosine(2503) in 23S rRNA + 5'-deoxyadenosine + L-methionine + 2 oxidized [2Fe-2S]-[ferredoxin] + S-adenosyl-L-homocysteine. The catalysed reaction is adenosine(37) in tRNA + 2 reduced [2Fe-2S]-[ferredoxin] + 2 S-adenosyl-L-methionine = 2-methyladenosine(37) in tRNA + 5'-deoxyadenosine + L-methionine + 2 oxidized [2Fe-2S]-[ferredoxin] + S-adenosyl-L-homocysteine. Its function is as follows. Specifically methylates position 2 of adenine 2503 in 23S rRNA and position 2 of adenine 37 in tRNAs. This chain is Probable dual-specificity RNA methyltransferase RlmN, found in Parabacteroides distasonis (strain ATCC 8503 / DSM 20701 / CIP 104284 / JCM 5825 / NCTC 11152).